A 423-amino-acid chain; its full sequence is Histidine--tRNA ligase (423 aa).

The protein belongs to the class-II aminoacyl-tRNA synthetase family. As to quaternary structure, homodimer.

It is found in the cytoplasm. The catalysed reaction is tRNA(His) + L-histidine + ATP = L-histidyl-tRNA(His) + AMP + diphosphate + H(+). The polypeptide is Histidine--tRNA ligase (Prochlorococcus marinus (strain NATL1A)).